A 78-amino-acid chain; its full sequence is Disintegrin DisBa-01 (78 aa).

The Disintegrin domain occupies 1 to 78 (GNELLEAGEE…AGCPRNPFHA (78 aa)). 6 disulfide bridges follow: cysteine 11-cysteine 26, cysteine 13-cysteine 21, cysteine 20-cysteine 43, cysteine 34-cysteine 40, cysteine 39-cysteine 64, and cysteine 52-cysteine 71. A Cell attachment site motif is present at residues 56–58 (RGD).

This sequence belongs to the venom metalloproteinase (M12B) family. P-II subfamily. P-IIa sub-subfamily. In terms of assembly, monomer. As to expression, expressed by the venom gland.

It localises to the secreted. Functionally, this recombinant disintegrin antagonizes integrins alpha-IIb/beta-3 (ITGA2B/ITGB3) and alpha-V/beta-3 (ITGAV/ITGB3). On ITGA2B/ITGB3, it interferes with the outside/-in phosphorylation of the focal adhesion kinase (PTK2 / FAK) downstream of the integrin. It strongly inhibits platelet aggregation induced by ADP, thrombin, and collagen, abolishes and reverses dynamic platelet recruitment to immobilized fibrinogen. In vivo, it induces a dramatic increase in the tail bleeding time, and has a strong antithrombotic activity. On ITGAV/ITGB3, it inhibits the adhesion of ITGAV/ITGB3-expressing human microvascular endothelial cell line and murine melanoma cell line to vitronectin (IC(50) are 555 nM and 225 nM, respectively), and transiently inhibits their proliferation without direct cell toxicity. In vivo, it potently inhibits angiogenesis and metastasis, probably due to its capability to strongly inhibit the expression of VEGF and its receptors in endothelial cells. It also inhibits tumor cell migration in vitro. This chain is Disintegrin DisBa-01, found in Bothrops alternatus (Urutu).